Reading from the N-terminus, the 814-residue chain is Phenylalanine--tRNA ligase beta subunit (814 aa).

A tRNA-binding domain is found at 39–153 (SKNVNGVVLG…LKHELGTPVS (115 aa)). Residues 414 to 500 (NEDIFIKLRR…RLIGYDRFDL (87 aa)) enclose the B5 domain. Positions 478, 484, 487, and 488 each coordinate Mg(2+). The 94-residue stretch at 720–813 (PIVPKIERDI…IEKSFQTKLR (94 aa)) folds into the FDX-ACB domain.

The protein belongs to the phenylalanyl-tRNA synthetase beta subunit family. Type 1 subfamily. As to quaternary structure, tetramer of two alpha and two beta subunits. Mg(2+) is required as a cofactor.

The protein resides in the cytoplasm. It carries out the reaction tRNA(Phe) + L-phenylalanine + ATP = L-phenylalanyl-tRNA(Phe) + AMP + diphosphate + H(+). This is Phenylalanine--tRNA ligase beta subunit from Prochlorococcus marinus (strain MIT 9312).